The chain runs to 66 residues: MAKNKGVRIVITLECTECRSASASEKRSPGVSRYTTEKNRRNTTERLEIMKFCPQLNKMTLHKEIK.

This sequence belongs to the bacterial ribosomal protein bL33 family.

The polypeptide is Large ribosomal subunit protein bL33 (Synechococcus sp. (strain CC9311)).